The primary structure comprises 346 residues: MTSVEELRACALLQDCADQLSVLGNIIRPGAETQQRTELHLKTAQLMAGSSLSNFSGELKSQKHFKIQQTLLASDNLAKVQKDRQFVSDVINALLEELQKKNNFQSLFSAVAEERKKKAELLDIINREEEGRRQIKKLQKQLLDIRKEKTEECERLEEEVAILKDQVQDMRVRTNQQGKFVKSCAEQLVYQESKHNSYKENELEDEVKMLQEKIEEEKNVHFETEAFLKQQHANLKQKLQYWIHRYEKDMEEKEQEITALQNKRNSSQTRIQDLSKKCKDMENVVIEDRIEKEHLRAQMEKEQREKNAATKIQAWWRGTLVRKGPRSKKADKSKKKDGKKGKKKRK.

The span at 299–308 (MEKEQREKNA) shows a compositional bias: basic and acidic residues. The tract at residues 299–346 (MEKEQREKNAATKIQAWWRGTLVRKGPRSKKADKSKKKDGKKGKKKRK) is disordered. Residues 305–334 (EKNAATKIQAWWRGTLVRKGPRSKKADKSK) form the IQ domain. A compositionally biased stretch (basic residues) spans 323 to 346 (KGPRSKKADKSKKKDGKKGKKKRK).

The protein belongs to the DRC9 family. In terms of assembly, component of the nexin-dynein regulatory complex (N-DRC). Interacts (via IQ domain) with calmodulin when calcium levels are low. Does not interact with calmodulin in the presence of Ca(2+). Interacts with hsp70 and may form a complex with camk4 and hsp70. Detected in adult testis, and at lower levels in brain, kidney and ovary.

It localises to the cytoplasm. The protein localises to the cell projection. The protein resides in the cilium. Its subcellular location is the flagellum. It is found in the cytoskeleton. It localises to the flagellum axoneme. Functionally, component of the nexin-dynein regulatory complex (N-DRC), a key regulator of ciliary/flagellar motility which maintains the alignment and integrity of the distal axoneme and regulates microtubule sliding in motile axonemes. Binds calmodulin when cellular Ca(2+) levels are low and thereby contributes to the regulation of calcium and calmodulin-dependent protein kinase IV (camk4) activity; contributes to the regulation of camk4 signaling cascades. Plays a role in the regulation of definitive hematopoiesis via its effects on camk4. The chain is Dynein regulatory complex protein 9 from Danio rerio (Zebrafish).